A 358-amino-acid polypeptide reads, in one-letter code: MNAARMNIKVSTPSRNYFVRIGKGLLQEGGSLARQLKLEKKIALLFDQAVETYATTLIDSLKAHDFEPQALAIPSGEGSKSFKTLETIVTALAEMKLDRKSTIIAVGGGVLGDVAGFAASIFLRGISYVLVPTTLLSMVDSSIGGKTGINLPQGKNLVGSFYQPLEVWIDPEVLATLSPRLISAGMAEIIKYGMISDQKLLDEIEKKEQSDLLYLIKRSVEIKAEVVGEDEREQTGRRAILNFGHTLGHALEAANGYKDLLHGEAVAIGMHASCLLSNRLLSFPDESTQRLKKILQLYSLPLKARGLSKKDVLEALQLDKKRERGTISWILLQKIGLPITSKDITKEDIDWILKEVLA.

NAD(+)-binding positions include 75 to 80 (SGEGSK), 109 to 113 (GVLGD), 133 to 134 (TT), lysine 146, and lysine 155. 3 residues coordinate Zn(2+): glutamate 188, histidine 245, and histidine 262.

Belongs to the sugar phosphate cyclases superfamily. Dehydroquinate synthase family. Requires Co(2+) as cofactor. Zn(2+) is required as a cofactor. NAD(+) serves as cofactor.

Its subcellular location is the cytoplasm. It carries out the reaction 7-phospho-2-dehydro-3-deoxy-D-arabino-heptonate = 3-dehydroquinate + phosphate. It functions in the pathway metabolic intermediate biosynthesis; chorismate biosynthesis; chorismate from D-erythrose 4-phosphate and phosphoenolpyruvate: step 2/7. Functionally, catalyzes the conversion of 3-deoxy-D-arabino-heptulosonate 7-phosphate (DAHP) to dehydroquinate (DHQ). This chain is 3-dehydroquinate synthase, found in Methylacidiphilum infernorum (isolate V4) (Methylokorus infernorum (strain V4)).